Reading from the N-terminus, the 334-residue chain is MAFNLRNRNFLKLLDFSTKEIQFLIDLSADLKKAKYAGTEQKKLLGKNIALIFEKASTRTRCAFEVAAFDQGAQVTYIGPSGSQIGDKESMKDTARVLGRMYDGIQYRGFGQAIVEELGAFAGVPVWNGLTDEFHPTQILADFLTMLEHSQGKALADIQFAYLGDARNNVGNSLMVGAAKMGMDIRLVGPQAYWPDEELVAACQAIAKQTGGKITLTENVAEGVQGCDFLYTDVWVSMGESPEAWDERVALMKPYQVNMNVLKQTGNPNVKFMHCLPAFHNDETTIGKQVADKFGMKGLEVTEEVFESEHSIVFDEAENRMHTIKAVMVATLGS.

Residues 57–60 (STRT), glutamine 84, arginine 108, and 135–138 (HPTQ) each bind carbamoyl phosphate. L-ornithine-binding positions include asparagine 169, aspartate 233, and 237-238 (SM). Carbamoyl phosphate-binding positions include 275–276 (CL) and arginine 320.

This sequence belongs to the aspartate/ornithine carbamoyltransferase superfamily. OTCase family. Homotrimer.

The protein localises to the cytoplasm. The enzyme catalyses carbamoyl phosphate + L-ornithine = L-citrulline + phosphate + H(+). The protein operates within amino-acid biosynthesis; L-arginine biosynthesis; L-arginine from L-ornithine and carbamoyl phosphate: step 1/3. Reversibly catalyzes the transfer of the carbamoyl group from carbamoyl phosphate (CP) to the N(epsilon) atom of ornithine (ORN) to produce L-citrulline. The polypeptide is Ornithine carbamoyltransferase (Vibrio vulnificus (strain CMCP6)).